We begin with the raw amino-acid sequence, 328 residues long: NADH-quinone oxidoreductase subunit H (328 aa).

Transmembrane regions (helical) follow at residues 8–28 (VAAI…AVGA), 81–101 (GLFV…FMVI), 114–134 (IGLL…LFAG), 154–174 (LSYE…AGSF), 186–206 (LWFI…GIAV), 237–257 (FFVG…TLFL), 265–285 (LPPI…FILL), and 304–324 (VCLP…LIFS).

Belongs to the complex I subunit 1 family. In terms of assembly, NDH-1 is composed of 14 different subunits. Subunits NuoA, H, J, K, L, M, N constitute the membrane sector of the complex.

It is found in the cell inner membrane. The catalysed reaction is a quinone + NADH + 5 H(+)(in) = a quinol + NAD(+) + 4 H(+)(out). Functionally, NDH-1 shuttles electrons from NADH, via FMN and iron-sulfur (Fe-S) centers, to quinones in the respiratory chain. The immediate electron acceptor for the enzyme in this species is believed to be ubiquinone. Couples the redox reaction to proton translocation (for every two electrons transferred, four hydrogen ions are translocated across the cytoplasmic membrane), and thus conserves the redox energy in a proton gradient. This subunit may bind ubiquinone. This chain is NADH-quinone oxidoreductase subunit H, found in Chromohalobacter salexigens (strain ATCC BAA-138 / DSM 3043 / CIP 106854 / NCIMB 13768 / 1H11).